We begin with the raw amino-acid sequence, 119 residues long: Large ribosomal subunit protein bL20 (119 aa).

It belongs to the bacterial ribosomal protein bL20 family.

Functionally, binds directly to 23S ribosomal RNA and is necessary for the in vitro assembly process of the 50S ribosomal subunit. It is not involved in the protein synthesizing functions of that subunit. In Dechloromonas aromatica (strain RCB), this protein is Large ribosomal subunit protein bL20.